Here is a 668-residue protein sequence, read N- to C-terminus: Phosphatidylinositol 4-phosphate 5-kinase type-1 gamma (668 aa).

The interval 45–67 (SMTAQPGPGHGKKLGHRGVDASG) is disordered. One can recognise a PIPK domain in the interval 75–443 (TSSTLKGAIQ…RFFKFMSNTV (369 aa)). N6-acetyllysine is present on residues Lys265 and Lys268. Asymmetric dimethylarginine; alternate is present on Arg459. Residue Arg459 is modified to Omega-N-methylarginine; alternate. A compositionally biased stretch (low complexity) spans 526–535 (TTLSSTSLSI). 2 disordered regions span residues 526 to 578 (TTLS…ITVQ) and 593 to 642 (EDAG…YFPT). Ser555 bears the Phosphoserine mark. A Phosphotyrosine; by EGFR modification is found at Tyr639. Residues 641 to 668 (PTDERSWVYSPLHYSAQAPPASDGESDT) form a mediates interaction with TLN2 region. Tyr649 is modified (phosphotyrosine; by CSK). Ser650 is modified (phosphoserine; by CDK5, MAPK1 and CDK1). A phosphoserine mark is found at Ser662 and Ser666. Position 668 is a phosphothreonine (Thr668).

In terms of assembly, interacts with TLN1. Interacts with TLN2; interaction stimulates 1-phosphatidylinositol-4-phosphate 5-kinase activity. May compete with beta-integrins for the same binding site on TLN1 and TLN2. Interacts with ARF6; interaction stimulates 1-phosphatidylinositol-4-phosphate 5-kinase activity. Interacts with AP2B1. Interacts with AP2M1; phosphorylation of PIP5K1C by CSK disrupts the interaction; clathrin competes with PIP5K1C. Interacts with CDH1. Interacts with CSK. Interacts with PLCG1; interaction is abolished upon EGF stimulation. Interacts with LAPTM4B; promotes SNX5 association with LAPTM4B; kinase activity of PIP5K1C is required; interaction is regulated by phosphatidylinositol 4,5-bisphosphate generated by PIP5K1C. Phosphorylation on Ser-650 negatively regulates binding to TLN2 and is strongly stimulated in mitosis. Phosphorylation on Tyr-649 is necessary for targeting to focal adhesions. Phosphorylation on Ser-650 and Tyr-649 are mutually exclusive. Phosphorylated by SYK and CSK. Tyrosine phosphorylation is enhanced by PTK2 signaling. Phosphorylated at Tyr-639 upon EGF stimulation. Some studies suggest that phosphorylation on Tyr-649 enhances binding to tailins (TLN1 and TLN2). According to PubMed:15738269 phosphorylation at Tyr-649 does not directly enhance binding to tailins (TLN1 and TLN2) but may act indirectly by inhibiting phosphorylation at Ser-650. Post-translationally, acetylation at Lys-265 and Lys-268 seems to decrease lipid 1-phosphatidylinositol-4-phosphate 5-kinase activity. Deacetylation of these sites by SIRT1 positively regulates the exocytosis of TSH-containing granules from pituitary cells. As to expression, isoform 1 is strongly expressed in brain and also detected in heart and lung. In terms of tissue distribution, isoform 2 is strongly expressed in pancreas and liver and in lesser quantities in brain, heart, lung and kidney. Isoform 3 is detected in large amounts in heart and large intestine, is also present in lung, pancreas and thyroid, and to a lesser extent in brain, stomach and kidney.

The protein resides in the cell membrane. Its subcellular location is the endomembrane system. The protein localises to the cytoplasm. It localises to the cell junction. It is found in the focal adhesion. The protein resides in the adherens junction. Its subcellular location is the cell projection. The protein localises to the ruffle membrane. It localises to the phagocytic cup. It is found in the uropodium. The protein resides in the nucleus. It catalyses the reaction a 1,2-diacyl-sn-glycero-3-phospho-(1D-myo-inositol 4-phosphate) + ATP = a 1,2-diacyl-sn-glycero-3-phospho-(1D-myo-inositol-4,5-bisphosphate) + ADP + H(+). The catalysed reaction is 1-octadecanoyl-2-(5Z,8Z,11Z,14Z)-eicosatetraenoyl-sn-glycero-3-phospho-1D-myo-inositol 4-phosphate + ATP = 1-octadecanoyl-2-(5Z,8Z,11Z,14Z)-eicosatetraenoyl-sn-glycero-3-phospho-1D-myo-inositol 4,5-bisphosphate + ADP + H(+). The enzyme catalyses 1-octadecanoyl-2-(9Z)-octadecenoyl-sn-glycero-3-phospho-1D-myo-inositol 4-phosphate + ATP = 1-octadecanoyl-2-(9Z)-octadecenoyl-sn-glycero-3-phospho-1D-myo-inositol 4,5-bisphosphate + ADP + H(+). It carries out the reaction 1-octadecanoyl-2-(9Z)-octadecenoyl-sn-glycero-3-phospho-1D-myo-inositol + ATP = 1-octadecanoyl-2-(9Z)-octadecenoyl-sn-glycero-3-phospho-1D-myo-inositol 5-phosphate + ADP + H(+). It catalyses the reaction 1-octadecanoyl-2-(9Z,12Z)-octadecadienoyl-sn-glycero-3-phospho-1D-myo-inositol + ATP = 1-octadecanoyl-2-(9Z,12Z)-octadecadienoyl-sn-glycero-3-phospho-1D-myo-inositol 5-phosphate + ADP + H(+). The catalysed reaction is 1-octadecanoyl-2-(5Z,8Z,11Z,14Z-eicosatetraenoyl)-sn-glycero-3-phospho-(1D-myo-inositol) + ATP = 1-octadecanoyl-2-(5Z,8Z,11Z,14Z)-eicosatetraenoyl-sn-glycero-3-phospho-1D-myo-inositol 5-phosphate + ADP + H(+). The enzyme catalyses 1,2-di-(9Z,12Z)-octadecadienoyl-sn-glycero-3-phospho-1D-myo-inositol + ATP = 1,2-di(9Z,12Z)-octadecadienoyl-sn-glycero-3-phospho-1D-myo-inositol 5-phosphate + ADP + H(+). Functionally, catalyzes the phosphorylation of phosphatidylinositol 4-phosphate (PtdIns(4)P/PI4P) to form phosphatidylinositol 4,5-bisphosphate (PtdIns(4,5)P2/PIP2), a lipid second messenger that regulates several cellular processes such as signal transduction, vesicle trafficking, actin cytoskeleton dynamics, cell adhesion, and cell motility. PtdIns(4,5)P2 can directly act as a second messenger or can be utilized as a precursor to generate other second messengers: inositol 1,4,5-trisphosphate (IP3), diacylglycerol (DAG) or phosphatidylinositol-3,4,5-trisphosphate (PtdIns(3,4,5)P3/PIP3). PIP5K1A-mediated phosphorylation of PtdIns(4)P is the predominant pathway for PtdIns(4,5)P2 synthesis. Together with PIP5K1A, is required for phagocytosis, both enzymes regulating different types of actin remodeling at sequential steps. Promotes particle attachment by generating the pool of PtdIns(4,5)P2 that induces controlled actin depolymerization to facilitate Fc-gamma-R clustering. Mediates RAC1-dependent reorganization of actin filaments. Required for synaptic vesicle transport. Controls the plasma membrane pool of PtdIns(4,5)P2 implicated in synaptic vesicle endocytosis and exocytosis. Plays a role in endocytosis mediated by clathrin and AP-2 (adaptor protein complex 2). Required for clathrin-coated pits assembly at the synapse. Participates in cell junction assembly. Modulates adherens junctions formation by facilitating CDH1/cadherin trafficking. Required for focal adhesion dynamics. Modulates the targeting of talins (TLN1 and TLN2) to the plasma membrane and their efficient assembly into focal adhesions. Regulates the interaction between talins (TLN1 and TLN2) and beta-integrins. Required for uropodium formation and retraction of the cell rear during directed migration. Has a role in growth factor-stimulated directional cell migration and adhesion. Required for talin assembly into nascent adhesions forming at the leading edge toward the direction of the growth factor. Negative regulator of T-cell activation and adhesion. Negatively regulates integrin alpha-L/beta-2 (LFA-1) polarization and adhesion induced by T-cell receptor. Together with PIP5K1A has a role during embryogenesis and together with PIP5K1B may have a role immediately after birth. The polypeptide is Phosphatidylinositol 4-phosphate 5-kinase type-1 gamma (Homo sapiens (Human)).